The following is a 211-amino-acid chain: Bcl-2-related ovarian killer protein homolog B (211 aa).

The BH4 motif lies at 32–44; it reads KELCRDFIHSRIT. Positions 67-83 match the BH3 motif; it reads VSVVLLKLGDELECMRP. A BH1 motif is present at residues 113 to 132; sequence EVIAMGITWGKVVAIYAVAA. The BH2 signature appears at 165 to 179; that stretch reads WLKKRGGWVDILKCV. The chain crosses the membrane as a helical span at residues 190-210; sequence WLSTAVLTWREFIKTMYVYLT.

The protein belongs to the Bcl-2 family. Expressed strongly in ovary and more weakly in eye. Little expression in other tissues examined.

Its subcellular location is the membrane. Functionally, may play a role in apoptosis. Does not appear to show pro-apoptotic activity when expressed ectopically in early embryos. In Danio rerio (Zebrafish), this protein is Bcl-2-related ovarian killer protein homolog B (bokb).